Here is a 373-residue protein sequence, read N- to C-terminus: Transcription factor NF-E2 45 kDa subunit (373 aa).

2 disordered regions span residues Met1 to Gly22 and Leu40 to Leu60. A required for interaction with MAPK8 region spans residues Met1–Tyr83. The interval Met1 to Glu206 is transactivation domain. Short sequence motifs (PXY motif) lie at residues Pro61–Tyr65 and Pro79–Tyr83. The segment at Leu131–Thr163 is disordered. Ser157 carries the phosphoserine; by MAPK8 modification. Ser170 bears the Phosphoserine; by PKA mark. The tract at residues Glu206–Arg225 is disordered. In terms of domain architecture, bZIP spans Leu266–Leu329. The basic motif stretch occupies residues Arg268 to Lys287. Positions Ile291–Leu298 are leucine-zipper. A Glycyl lysine isopeptide (Lys-Gly) (interchain with G-Cter in SUMO); alternate cross-link involves residue Lys368. Lys368 is covalently cross-linked (Glycyl lysine isopeptide (Lys-Gly) (interchain with G-Cter in SUMO1); alternate).

It belongs to the bZIP family. CNC subfamily. As to quaternary structure, homodimer; can bind DNA as a homodimer. Erythroid transcription activator nuclear factor erythroid-derived 2 (NF-E2), composed of a heterodimer of NFE2 and MAFK, possesses transactivation activity on beta-globin. Also forms high affinity heterodimer with MAFG; the interaction promotes erythropoiesis. Interacts (via the PXY motif 1) with ITCH (via the WW 1 domain); the interaction promotes 'Lys63'-linked ubiquitination of NFE2, translocates it to the cytoplasm and inhibits its transactivation activity. Interacts with KMT2D/MLL2; the interaction promotes transactivation of the beta-globin locus. Interacts with MAPK8 (phosphorylated form); the interaction leads to phosphorylation of NFE2 in undifferentiated cells. Phosphorylated on serine residues. In undifferentiated erythrocytes, phosphorylated by MAPK8 which then leads to ubiquitination and protein degradation. In terms of processing, sumoylated. Sumoylation is required for translocation to nuclear bodies PODs, anchoring to the gene loci, and transactivation of the beta-globin gene. Post-translationally, ubiquitinated mainly by 'Lys63'-linked ubiquitin. Polyubiquitination with 'Lys63'-linked ubiquitin by ITCH retains NFE2 in the cytoplasm preventing its transactivation activity. In undifferentiated erythrocyte, ubiquitinated after MAPK8-mediatd phosphorylation leading to protein degradation.

It localises to the nucleus. The protein resides in the PML body. It is found in the cytoplasm. Component of the NF-E2 complex essential for regulating erythroid and megakaryocytic maturation and differentiation. Binds to the hypersensitive site 2 (HS2) of the beta-globin control region (LCR). This subunit (NFE2) recognizes the TCAT/C sequence of the AP-1-like core palindrome present in a number of erythroid and megakaryocytic gene promoters. Requires MAFK or other small MAF proteins for binding to the NF-E2 motif. May play a role in all aspects of hemoglobin production from globin and heme synthesis to procurement of iron. The polypeptide is Transcription factor NF-E2 45 kDa subunit (Nfe2) (Rattus norvegicus (Rat)).